The sequence spans 262 residues: MATLLEKTRKITAILQDGVTDLQQELPYNSMTERLANVIDCNACVINTKGELLGYSLPYNTNNDRVDQFFYDRKLPDEYVRAAVRVYDTMANVPVDRPLAIFPEESLSDFPKGVTTLAPIYGSGMRLGTFIMWREDGEFTDDDLVLVELATTVIGVQLSNLKLEQMEENIRKDTMATMAVNTLSYSEMKAVKAIIEELDGEEGHVIASVIADKIGITRSVIVNALRKLESAGVIESRSLGMKGTYLKVLNTGLFDKLAGRNF.

Residues 1–159 (MATLLEKTRK…ATTVIGVQLS (159 aa)) are GAF domain. Residues 207-226 (ASVIADKIGITRSVIVNALR) constitute a DNA-binding region (H-T-H motif).

Belongs to the CodY family.

It localises to the cytoplasm. Its function is as follows. DNA-binding global transcriptional regulator which is involved in the adaptive response to starvation and acts by directly or indirectly controlling the expression of numerous genes in response to nutrient availability. During rapid exponential growth, CodY is highly active and represses genes whose products allow adaptation to nutrient depletion. In Lactococcus lactis subsp. cremoris (strain SK11), this protein is Global transcriptional regulator CodY.